The following is a 555-amino-acid chain: Hydroxylamine reductase (555 aa).

Residues C5, C8, C17, and C23 each contribute to the [4Fe-4S] cluster site. Hybrid [4Fe-2O-2S] cluster is bound by residues H248, E272, C316, C408, C436, C461, E496, and K498. C408 is modified (cysteine persulfide).

The protein belongs to the HCP family. [4Fe-4S] cluster serves as cofactor. Requires hybrid [4Fe-2O-2S] cluster as cofactor.

The protein resides in the cytoplasm. The catalysed reaction is A + NH4(+) + H2O = hydroxylamine + AH2 + H(+). In terms of biological role, catalyzes the reduction of hydroxylamine to form NH(3) and H(2)O. In Natranaerobius thermophilus (strain ATCC BAA-1301 / DSM 18059 / JW/NM-WN-LF), this protein is Hydroxylamine reductase.